The chain runs to 530 residues: Transcription factor SPT20 homolog (530 aa).

Ser296 is subject to Phosphoserine. Residues 419 to 530 (CPVKMSHSSS…PASSSQRHES (112 aa)) form a disordered region. Composition is skewed to low complexity over residues 424–436 (SHSS…LNSG) and 466–475 (SSSGNSSSGN). Thr490 is modified (phosphothreonine). A compositionally biased stretch (low complexity) spans 514–530 (LSPAALSPASSSQRHES). A phosphoserine mark is found at Ser515 and Ser520.

Belongs to the SPT20 family. Interacts with ATG9A. Interacts with MAPK14.

Required for MAP kinase p38 (MAPK11, MAPK12, MAPK13 and/or MAPK14) activation during gastrulation. Required for down-regulation of E-cadherin during gastrulation by regulating E-cadherin protein level downstream from NCK-interacting kinase (NIK) and independently of the regulation of transcription by FGF signaling and Snail. Required for starvation-induced ATG9A trafficking during autophagy. In Rattus norvegicus (Rat), this protein is Transcription factor SPT20 homolog (Supt20h).